Here is a 98-residue protein sequence, read N- to C-terminus: Cystatin-B (98 aa).

An N-acetylmethionine modification is found at methionine 1. A Secondary area of contact motif is present at residues 46-50 (QVVAG).

The protein belongs to the cystatin family. As to quaternary structure, able to form dimers stabilized by noncovalent forces.

It is found in the cytoplasm. It localises to the nucleus. Its function is as follows. This is an intracellular thiol proteinase inhibitor. Tightly binding reversible inhibitor of cathepsins L, H and B. The polypeptide is Cystatin-B (CSTB) (Macaca fuscata fuscata (Japanese macaque)).